Here is a 318-residue protein sequence, read N- to C-terminus: Ubiquitin-like domain-containing CTD phosphatase 1 (318 aa).

Residues 3-81 (LSLIIKWGGQ…IMMMGTREES (79 aa)) form the Ubiquitin-like domain. Positions 133-294 (PREGKKLLVL…LKLSQYLKEI (162 aa)) constitute an FCP1 homology domain. Positions 143, 145, and 253 each coordinate Mg(2+).

Mg(2+) serves as cofactor.

The protein localises to the nucleus. It catalyses the reaction O-phospho-L-seryl-[protein] + H2O = L-seryl-[protein] + phosphate. It carries out the reaction O-phospho-L-threonyl-[protein] + H2O = L-threonyl-[protein] + phosphate. Functionally, dephosphorylates 26S nuclear proteasomes, thereby decreasing their proteolytic activity. Recruited to the 19S regulatory particle of the 26S proteasome where it dephosphorylates 19S component psmc2 which impairs psmc2 ATPase activity and disrupts 26S proteasome assembly. Has also been reported to stimulate the proteolytic activity of the 26S proteasome. This Xenopus tropicalis (Western clawed frog) protein is Ubiquitin-like domain-containing CTD phosphatase 1 (ublcp1).